The sequence spans 34 residues: Voltage sensor toxin 3 (34 aa).

Disulfide bonds link Cys2–Cys17, Cys9–Cys22, and Cys16–Cys29.

This sequence belongs to the neurotoxin 10 (Hwtx-1) family. 61 (VSTX3) subfamily. As to expression, expressed by the venom gland.

Its subcellular location is the secreted. Functionally, potent voltage-gated sodium channel blocker (IC(50)=190 nM and 210 nM on human and rat Nav1.3/SCN3A respectively, 430 nM on human Nav1.7/SCN9A, 770 nM and 290 nM on human and rat Nav1.8/SCN10A, respectively). Binds the voltage-sensor domain of the potassium channel KvAP (from Aeropyrum pernix) and weakly inhibits this channel. The sequence is that of Voltage sensor toxin 3 from Grammostola rosea (Chilean rose tarantula).